Here is a 143-residue protein sequence, read N- to C-terminus: Endoribonuclease YbeY (143 aa).

Histidine 109, histidine 113, and histidine 119 together coordinate Zn(2+).

It belongs to the endoribonuclease YbeY family. It depends on Zn(2+) as a cofactor.

The protein resides in the cytoplasm. In terms of biological role, single strand-specific metallo-endoribonuclease involved in late-stage 70S ribosome quality control and in maturation of the 3' terminus of the 16S rRNA. The polypeptide is Endoribonuclease YbeY (Neorickettsia sennetsu (strain ATCC VR-367 / Miyayama) (Ehrlichia sennetsu)).